The chain runs to 297 residues: 4-hydroxy-tetrahydrodipicolinate synthase (297 aa).

Pyruvate is bound at residue Thr49. The active-site Proton donor/acceptor is the Tyr137. The active-site Schiff-base intermediate with substrate is Lys166. Ile208 lines the pyruvate pocket.

The protein belongs to the DapA family. Homotetramer; dimer of dimers.

The protein resides in the cytoplasm. The enzyme catalyses L-aspartate 4-semialdehyde + pyruvate = (2S,4S)-4-hydroxy-2,3,4,5-tetrahydrodipicolinate + H2O + H(+). It participates in amino-acid biosynthesis; L-lysine biosynthesis via DAP pathway; (S)-tetrahydrodipicolinate from L-aspartate: step 3/4. Its function is as follows. Catalyzes the condensation of (S)-aspartate-beta-semialdehyde [(S)-ASA] and pyruvate to 4-hydroxy-tetrahydrodipicolinate (HTPA). The sequence is that of 4-hydroxy-tetrahydrodipicolinate synthase from Phocaeicola vulgatus (strain ATCC 8482 / DSM 1447 / JCM 5826 / CCUG 4940 / NBRC 14291 / NCTC 11154) (Bacteroides vulgatus).